A 292-amino-acid chain; its full sequence is Acetyl-coenzyme A carboxylase carboxyl transferase subunit beta (292 aa).

The CoA carboxyltransferase N-terminal domain maps to 29–292 (LWSKCPECGQ…HGCESRVASS (264 aa)). Zn(2+)-binding residues include Cys-33, Cys-36, Cys-52, and Cys-55. A C4-type zinc finger spans residues 33-55 (CPECGQVVYRKDLLSNASVCGNC).

This sequence belongs to the AccD/PCCB family. In terms of assembly, acetyl-CoA carboxylase is a heterohexamer composed of biotin carboxyl carrier protein (AccB), biotin carboxylase (AccC) and two subunits each of ACCase subunit alpha (AccA) and ACCase subunit beta (AccD). Requires Zn(2+) as cofactor.

It localises to the cytoplasm. The enzyme catalyses N(6)-carboxybiotinyl-L-lysyl-[protein] + acetyl-CoA = N(6)-biotinyl-L-lysyl-[protein] + malonyl-CoA. It participates in lipid metabolism; malonyl-CoA biosynthesis; malonyl-CoA from acetyl-CoA: step 1/1. Component of the acetyl coenzyme A carboxylase (ACC) complex. Biotin carboxylase (BC) catalyzes the carboxylation of biotin on its carrier protein (BCCP) and then the CO(2) group is transferred by the transcarboxylase to acetyl-CoA to form malonyl-CoA. This Synechococcus sp. (strain CC9311) protein is Acetyl-coenzyme A carboxylase carboxyl transferase subunit beta.